Reading from the N-terminus, the 259-residue chain is UPF0246 protein VFMJ11_2214 (259 aa).

Belongs to the UPF0246 family.

This is UPF0246 protein VFMJ11_2214 from Aliivibrio fischeri (strain MJ11) (Vibrio fischeri).